Consider the following 239-residue polypeptide: Phosphoribosylaminoimidazole-succinocarboxamide synthase (239 aa).

Belongs to the SAICAR synthetase family.

It carries out the reaction 5-amino-1-(5-phospho-D-ribosyl)imidazole-4-carboxylate + L-aspartate + ATP = (2S)-2-[5-amino-1-(5-phospho-beta-D-ribosyl)imidazole-4-carboxamido]succinate + ADP + phosphate + 2 H(+). It participates in purine metabolism; IMP biosynthesis via de novo pathway; 5-amino-1-(5-phospho-D-ribosyl)imidazole-4-carboxamide from 5-amino-1-(5-phospho-D-ribosyl)imidazole-4-carboxylate: step 1/2. In Bacillus cereus (strain 03BB102), this protein is Phosphoribosylaminoimidazole-succinocarboxamide synthase.